A 473-amino-acid polypeptide reads, in one-letter code: Ras-GEF domain-containing family member 1B (473 aa).

Residues 34-161 form the N-terminal Ras-GEF domain; it reads HDNNLLSGSL…NVQQMMQCLI (128 aa). The region spanning 205 to 453 is the Ras-GEF domain; that stretch reads DPYTLAQQLT…YLASYESEGP (249 aa).

As to quaternary structure, interacts with CCDC124 during cytokinesis. Interacts with Ras family proteins. In terms of tissue distribution, constitutively expressed in brain, intestine and testis. Low constitutive expression, if any, in heart, lung, lymph nodes and thymus. Up-regulated in heart, kidney, liver, lymph nodes, spleen and thymus at day 20 after infection with Trypanosoma cruzi. Not detected in muscle.

It localises to the early endosome. Its subcellular location is the late endosome. The protein localises to the midbody. Its function is as follows. Guanine nucleotide exchange factor (GEF) with specificity for RAP2A, it doesn't seems to activate other Ras family proteins (in vitro). This is Ras-GEF domain-containing family member 1B (Rasgef1b) from Mus musculus (Mouse).